The sequence spans 161 residues: NADH-quinone oxidoreductase subunit I (161 aa).

4Fe-4S ferredoxin-type domains are found at residues 52-82 and 92-121; these read LRRY…IESE and KRYD…ETRV. The [4Fe-4S] cluster site is built by Cys-62, Cys-65, Cys-68, Cys-72, Cys-101, Cys-104, Cys-107, and Cys-111.

It belongs to the complex I 23 kDa subunit family. As to quaternary structure, NDH-1 is composed of 14 different subunits. Subunits NuoA, H, J, K, L, M, N constitute the membrane sector of the complex. It depends on [4Fe-4S] cluster as a cofactor.

It is found in the cell inner membrane. The enzyme catalyses a quinone + NADH + 5 H(+)(in) = a quinol + NAD(+) + 4 H(+)(out). NDH-1 shuttles electrons from NADH, via FMN and iron-sulfur (Fe-S) centers, to quinones in the respiratory chain. The immediate electron acceptor for the enzyme in this species is believed to be ubiquinone. Couples the redox reaction to proton translocation (for every two electrons transferred, four hydrogen ions are translocated across the cytoplasmic membrane), and thus conserves the redox energy in a proton gradient. This chain is NADH-quinone oxidoreductase subunit I, found in Aromatoleum aromaticum (strain DSM 19018 / LMG 30748 / EbN1) (Azoarcus sp. (strain EbN1)).